Consider the following 547-residue polypeptide: Sodium-coupled neutral amino acid transporter 4 (547 aa).

The tract at residues 1 to 26 (MDPMELRNVNIEPDDESSSGESVPDS) is disordered. Residues 1 to 104 (MDPMELRNVN…GLSYAMANTG (104 aa)) are Extracellular-facing. Ser-49 is subject to Phosphoserine. A helical transmembrane segment spans residues 105 to 125 (IILFIIMLLAVAILSLYSVHL). Residues 126 to 151 (LLKTAKEGGSLIYEKLGEKAFGWPGK) lie on the Cytoplasmic side of the membrane. The helical transmembrane segment at 152-172 (IGAFISITMQNIGAMSSYLFI) threads the bilayer. Residues 173-195 (IKYELPEVIRAFMGLEENTGEWY) are Extracellular-facing. The helical transmembrane segment at 196–216 (PNGNYLIVFVSLGIILPLSLL) threads the bilayer. The Cytoplasmic portion of the chain corresponds to 217–220 (KNLG). Residues 221–241 (YLGYTSGFSLTCMVFFVSVVI) traverse the membrane as a helical segment. At 242-332 (YKKFQIPCPL…PKYFVFNSRT (91 aa)) the chain is on the extracellular side. Residues Cys-249 and Cys-321 are joined by a disulfide bond. Asn-260, Asn-264, and Asn-276 each carry an N-linked (GlcNAc...) asparagine glycan. A helical membrane pass occupies residues 333–353 (AYAIPILAFAFVCHPEVLPIY). Residues 354 to 369 (SELKDRSRRKMQTVSN) lie on the Cytoplasmic side of the membrane. A helical transmembrane segment spans residues 370-390 (ISITGMLVMYLLAALFGYLTF). Residues 391–411 (YGEVEDELLHAYSKVYTFDIP) lie on the Extracellular side of the membrane. Residues 412–432 (LLMVRLAVLVAVTLTVPIVLF) form a helical membrane-spanning segment. Topologically, residues 433-453 (PIRTSVTTLLFPKRPFSWIRH) are cytoplasmic. Residues 454-474 (FLIAAVLIALNNVLVILVPTI) traverse the membrane as a helical segment. Topologically, residues 475–476 (KY) are extracellular. Residues 477–497 (IFGFIGASSATMLIFILPAVF) form a helical membrane-spanning segment. Topologically, residues 498-514 (YLKLVKKESFRSPQKVG) are cytoplasmic. The chain crosses the membrane as a helical span at residues 515–535 (ALIFLVVGIIFMIGSMALIII). Over 536–547 (DWIYDPPNSKHH) the chain is Extracellular.

It belongs to the amino acid/polyamine transporter 2 family. Post-translationally, the disulfide bond plays an important role in substrate transport, but has no effect on trafficking to the cell surface.

The protein localises to the cell membrane. The protein resides in the cell projection. It localises to the microvillus membrane. It carries out the reaction L-methionine(in) + Na(+)(in) = L-methionine(out) + Na(+)(out). The enzyme catalyses L-asparagine(in) + Na(+)(in) = L-asparagine(out) + Na(+)(out). It catalyses the reaction L-threonine(in) + Na(+)(in) = L-threonine(out) + Na(+)(out). The catalysed reaction is L-serine(in) + Na(+)(in) = L-serine(out) + Na(+)(out). It carries out the reaction glycine(in) + Na(+)(in) = glycine(out) + Na(+)(out). The enzyme catalyses L-alanine(in) + Na(+)(in) = L-alanine(out) + Na(+)(out). It catalyses the reaction L-glutamine(in) + Na(+)(in) = L-glutamine(out) + Na(+)(out). The catalysed reaction is L-histidine(in) + Na(+)(in) = L-histidine(out) + Na(+)(out). It carries out the reaction L-cysteine(in) + Na(+)(in) = L-cysteine(out) + Na(+)(out). The enzyme catalyses L-proline(in) + Na(+)(in) = L-proline(out) + Na(+)(out). Its function is as follows. Symporter that cotransports neutral amino acids and sodium ions from the extraccellular to the intracellular side of the cell membrane. The transport is electrogenic, pH dependent and partially tolerates substitution of Na(+) by Li(+). Preferentially transports smaller amino acids, such as glycine, L-alanine, L-serine, L-asparagine and L-threonine, followed by L-cysteine, L-histidine, L-proline and L-glutamine and L-methionine. This Pongo abelii (Sumatran orangutan) protein is Sodium-coupled neutral amino acid transporter 4.